We begin with the raw amino-acid sequence, 445 residues long: Protein trichome berefringence-like 7 (445 aa).

The helical; Signal-anchor for type II membrane protein transmembrane segment at 69–89 (IIAGTIVSFLVIIAGGYLYVV) threads the bilayer. A GDS motif motif is present at residues 188–190 (GDS). The short motif at 418–432 (DCSHWCLPGVPDIWN) is the DCXHWCLPGXXDXWN motif element.

It belongs to the PC-esterase family. TBL subfamily.

Its subcellular location is the membrane. Functionally, may act as a bridging protein that binds pectin and other cell wall polysaccharides. Probably involved in maintaining esterification of pectins. May be involved in the specific O-acetylation of cell wall polymers. This Arabidopsis thaliana (Mouse-ear cress) protein is Protein trichome berefringence-like 7 (TBL7).